Reading from the N-terminus, the 135-residue chain is MPFRVEVLNETSGGARLTPERATELCRRAFVERGLDPERMGELSVALVEPEVIHDLNLKFRNKDAPTDVLSFEVDGPYGEMVGEIVICPGCAEMDLEELVVHGALHLSGMDHGENFEASEMARVQKRVMEAVRGR.

The Zn(2+) site is built by histidine 102, histidine 106, and histidine 112.

The protein belongs to the endoribonuclease YbeY family. It depends on Zn(2+) as a cofactor.

The protein localises to the cytoplasm. Its function is as follows. Single strand-specific metallo-endoribonuclease involved in late-stage 70S ribosome quality control and in maturation of the 3' terminus of the 16S rRNA. This Rubrobacter xylanophilus (strain DSM 9941 / JCM 11954 / NBRC 16129 / PRD-1) protein is Endoribonuclease YbeY.